The following is a 625-amino-acid chain: UvrABC system protein C (625 aa).

Residues 26–105 (LEPGVYFLRD…IKQHQPHFNT (80 aa)) enclose the GIY-YIG domain. The UVR domain maps to 215-250 (GELLEKLATKMLAASENLDFEQAATIRDQIRGLQAL).

Belongs to the UvrC family. As to quaternary structure, interacts with UvrB in an incision complex.

The protein resides in the cytoplasm. Its function is as follows. The UvrABC repair system catalyzes the recognition and processing of DNA lesions. UvrC both incises the 5' and 3' sides of the lesion. The N-terminal half is responsible for the 3' incision and the C-terminal half is responsible for the 5' incision. This Microcystis aeruginosa (strain NIES-843 / IAM M-2473) protein is UvrABC system protein C.